Reading from the N-terminus, the 372-residue chain is Pyruvylated Gal-beta-1,3-epitope synthesis protein 5 (372 aa).

Residues 1 to 12 (MGLPLRIFAGNG) are Cytoplasmic-facing. A helical; Signal-anchor for type II membrane protein transmembrane segment spans residues 13-35 (IGGWCLRLFLFGSLILLLRPLIF). The Lumenal segment spans residues 36-372 (YSNTTMKKLK…LRIIEQWKQL (337 aa)). N-linked (GlcNAc...) asparagine glycans are attached at residues N38 and N128.

Its subcellular location is the golgi apparatus membrane. In terms of biological role, involved in cell wall biogenesis. Has a role in the addition of Gal-beta1,3 moeities to galactomannans and their subsequent pyruvylation. Has a role in meiosis. The polypeptide is Pyruvylated Gal-beta-1,3-epitope synthesis protein 5 (pvg5) (Schizosaccharomyces pombe (strain 972 / ATCC 24843) (Fission yeast)).